Here is a 474-residue protein sequence, read N- to C-terminus: Dol-P-Glc:Glc(2)Man(9)GlcNAc(2)-PP-Dol alpha-1,2-glucosyltransferase (474 aa).

Topologically, residues 1 to 6 (MAQLEG) are cytoplasmic. Residues 7 to 27 (YYFSAALSCTFLVSCLLFSAF) form a helical membrane-spanning segment. Residues 28–64 (SRALREPYMDEIFHLPQAQRYCEGRFSLSQWDPMITT) lie on the Extracellular side of the membrane. A helical membrane pass occupies residues 65–85 (LPGLYLVSVGVVKPASWLLGW). At 86–97 (SEHVICSIGVLR) the chain is on the cytoplasmic side. The helical transmembrane segment at 98–118 (FVNLLFSVGNFYLLYLLFRKV) threads the bilayer. Residues 119–126 (QPRNKASS) lie on the Extracellular side of the membrane. The chain crosses the membrane as a helical span at residues 127 to 147 (SIQRILSTLTLAVFPTLYFFN). Residues 148–150 (FLY) lie on the Cytoplasmic side of the membrane. Residues 151–171 (YTEAGSVFFTLFAYLMCLYGN) form a helical membrane-spanning segment. At 172–175 (HRTS) the chain is on the extracellular side. A helical transmembrane segment spans residues 176–196 (ALLGFCGFMFRQTNIIWAAFC). At 197–256 (AGHLIAQKCSEAWKIELQKKKEERLAPTKGPLSELRRVLQFLLVYAMSLKNLRMLFLLTW) the chain is on the cytoplasmic side. The chain crosses the membrane as a helical span at residues 257 to 277 (PYVLLLLAFFAFVVVNGGIVV). The Extracellular portion of the chain corresponds to 278–283 (GDRSSH). A helical transmembrane segment spans residues 284–304 (EACLHFPQLFYFFSFTAFFSF). Over 305–317 (PHLLSLTKVKTFL) the chain is Cytoplasmic. The chain crosses the membrane as a helical span at residues 318 to 338 (SLVWKRRVQFSVVTLVSILLV). At 339 to 365 (WKFTYVHKYLLADNRHYTFYVWKRVFQ) the chain is on the extracellular side. Residues 366–386 (RHEVVKYLLVPAYIFAGWAIA) form a helical membrane-spanning segment. The Cytoplasmic segment spans residues 387-392 (DSLKAK). The chain crosses the membrane as a helical span at residues 393–413 (SIFWNLMFFVCLVASTVPQKL). Topologically, residues 414–436 (LEFRYFILPYIIYRLNIPLPPIS) are extracellular. The helical transmembrane segment at 437–457 (RLVCELGCYTVVNFVTFYIFL) threads the bilayer. The Cytoplasmic portion of the chain corresponds to 458-473 (NKTFQWPNSQDIQRFM).

Belongs to the ALG10 glucosyltransferase family. Interacts with KCNH1; may regulate KCNH1, possibly by regulating its N-glycosylation. Interacts with KCNH2; may reduce KCNH2 sensitivity to classic proarrhythmic drug blockade, possibly by regulating its N-glycosylation.

It is found in the endoplasmic reticulum membrane. The catalysed reaction is an alpha-D-Glc-(1-&gt;3)-alpha-D-Glc-(1-&gt;3)-alpha-D-Man-(1-&gt;2)-alpha-D-Man-(1-&gt;2)-alpha-D-Man-(1-&gt;3)-[alpha-D-Man-(1-&gt;2)-alpha-D-Man-(1-&gt;3)-[alpha-D-Man-(1-&gt;2)-alpha-D-Man-(1-&gt;6)]-alpha-D-Man-(1-&gt;6)]-beta-D-Man-(1-&gt;4)-beta-D-GlcNAc-(1-&gt;4)-alpha-D-GlcNAc-diphospho-di-trans,poly-cis-dolichol + a di-trans,poly-cis-dolichyl beta-D-glucosyl phosphate = a alpha-D-Glc-(1-&gt;2)-alpha-D-Glc-(1-&gt;3)-alpha-D-Glc-(1-&gt;3)-alpha-D-Man-(1-&gt;2)-alpha-D-Man-(1-&gt;2)-alpha-D-Man-(1-&gt;3)-[alpha-D-Man-(1-&gt;2)-alpha-D-Man-(1-&gt;3)-[alpha-D-Man-(1-&gt;2)-alpha-D-Man-(1-&gt;6)]-alpha-D-Man-(1-&gt;6)]-beta-D-Man-(1-&gt;4)-beta-D-GlcNAc-(1-&gt;4)-alpha-D-GlcNAc-diphospho-di-trans,poly-cis-dolichol + a di-trans,poly-cis-dolichyl phosphate + H(+). Its pathway is protein modification; protein glycosylation. Dol-P-Glc:Glc(2)Man(9)GlcNAc(2)-PP-Dol alpha-1,2-glucosyltransferase that operates in the biosynthetic pathway of dolichol-linked oligosaccharides, the glycan precursors employed in protein asparagine (N)-glycosylation. The assembly of dolichol-linked oligosaccharides begins on the cytosolic side of the endoplasmic reticulum membrane and finishes in its lumen. The sequential addition of sugars to dolichol pyrophosphate produces dolichol-linked oligosaccharides containing fourteen sugars, including two GlcNAcs, nine mannoses and three glucoses. Once assembled, the oligosaccharide is transferred from the lipid to nascent proteins by oligosaccharyltransferases. In the lumen of the endoplasmic reticulum, adds the third and last glucose residue from dolichyl phosphate glucose (Dol-P-Glc) onto the lipid-linked oligosaccharide intermediate Glc(2)Man(9)GlcNAc(2)-PP-Dol to produce Glc(3)Man(9)GlcNAc(2)-PP-Dol. This is Dol-P-Glc:Glc(2)Man(9)GlcNAc(2)-PP-Dol alpha-1,2-glucosyltransferase from Mus musculus (Mouse).